The primary structure comprises 292 residues: ATP synthase gamma chain (292 aa).

It belongs to the ATPase gamma chain family. In terms of assembly, F-type ATPases have 2 components, CF(1) - the catalytic core - and CF(0) - the membrane proton channel. CF(1) has five subunits: alpha(3), beta(3), gamma(1), delta(1), epsilon(1). CF(0) has three main subunits: a, b and c.

The protein localises to the cell inner membrane. Functionally, produces ATP from ADP in the presence of a proton gradient across the membrane. The gamma chain is believed to be important in regulating ATPase activity and the flow of protons through the CF(0) complex. This Nitrobacter hamburgensis (strain DSM 10229 / NCIMB 13809 / X14) protein is ATP synthase gamma chain.